Consider the following 350-residue polypeptide: Cobalt-precorrin-5B C(1)-methyltransferase (350 aa).

The protein belongs to the CbiD family.

The catalysed reaction is Co-precorrin-5B + S-adenosyl-L-methionine = Co-precorrin-6A + S-adenosyl-L-homocysteine. The protein operates within cofactor biosynthesis; adenosylcobalamin biosynthesis; cob(II)yrinate a,c-diamide from sirohydrochlorin (anaerobic route): step 6/10. Functionally, catalyzes the methylation of C-1 in cobalt-precorrin-5B to form cobalt-precorrin-6A. The polypeptide is Cobalt-precorrin-5B C(1)-methyltransferase (Sulfurisphaera tokodaii (strain DSM 16993 / JCM 10545 / NBRC 100140 / 7) (Sulfolobus tokodaii)).